The primary structure comprises 562 residues: Proton channel OTOP2 (562 aa).

Residues Met-1–Pro-20 form a disordered region. The next 12 helical transmembrane spans lie at Leu-30 to Gly-50, Val-62 to Leu-82, Pro-100 to Phe-120, Ile-137 to Ser-157, Thr-169 to Val-189, Phe-241 to Met-261, Phe-289 to Ile-309, Ala-324 to Leu-344, Leu-371 to Val-391, Leu-402 to Ile-422, Asp-495 to Ala-515, and Phe-527 to Tyr-547.

This sequence belongs to the otopetrin family.

The protein localises to the cell membrane. The enzyme catalyses H(+)(in) = H(+)(out). Its activity is regulated as follows. Actives at neutral and alkaline extracellular pH, acid extracellular pH appears to inhibit the channel. Insensitive to activation by Zn(2+). Functionally, proton-selective ion channel open at neutral pH. Actives at neutral and alkaline extracellular pH, likely participates in some alkali-related physiological activities. The polypeptide is Proton channel OTOP2 (Homo sapiens (Human)).